Consider the following 652-residue polypeptide: Protein high chlorophyll fluorescent 107 (652 aa).

Disordered stretches follow at residues 1–21 (MHFF…NTSS) and 78–121 (VFSP…EGKK). Residues 1–68 (MHFFFVPNSS…TFSSKNTYLY (68 aa)) constitute a chloroplast transit peptide. The segment covering 105 to 121 (PLLENSDKESSEEEGKK) has biased composition (basic and acidic residues). TPR repeat units follow at residues 168–201 (LDLS…WPED), 202–235 (GRPY…TQGE), 237–270 (SYIW…DKKH), 271–304 (VAAW…CGRN), 305–338 (EYIY…NSRS), 339–372 (CASW…SPKN), 374–406 (FAWH…NPRD), 407–440 (PVLL…DPRH), 441–474 (QPVW…DANT), 478–511 (SRCL…NSQS), 543–576 (TEVV…GQNN), and 598–631 (QQPE…DPLK). The interval 585-610 (LRNMNRTKDSQSNQQPESSAGREDIE) is disordered.

May form homomultimers. Part of a multi-subunit complex in the range of 60-190 and 600-800 kDa in chloroplast membranes.

It localises to the plastid. The protein resides in the chloroplast. It is found in the chloroplast membrane. The protein localises to the chloroplast stroma. Its function is as follows. Involved, directly or indirectly, in the processing of chloroplast encoded mRNAs. Exhibits sequence-specific RNA binding and RNA remodeling activities, probably leading to the activation of translation of the target gene cluster psbB-psbT-psbH-petB-petD. Blocks 5'-3' and 3'-5' exoribonucleases (e.g. polynucleotide phosphorylase (PNPase), RNase R) in vitro. Necessary for intercistronic RNA processing of the psbH 5' untranslated region or the stabilization of 5' processed psbH RNAs. Also required for the synthesis of psbB. The protein is Protein high chlorophyll fluorescent 107 of Arabidopsis thaliana (Mouse-ear cress).